We begin with the raw amino-acid sequence, 340 residues long: Major histocompatibility complex class I-related gene protein (340 aa).

Residues Met-1 to Ser-22 form the signal peptide. Residues Arg-23–Ser-109 are alpha-1. Positions Arg-23 to Thr-201 are antigen-binding cleft. Topologically, residues Arg-23–Met-302 are extracellular. Positions 29 and 31 each coordinate 8-(9H-purin-6-yl)-2-oxa-8-azabicyclo[3.3.1]nona-3,6-diene-4,6-dicarbaldehyde. 3 residues coordinate 5-(2-oxoethylideneamino)-6-(D-ribitylamino)uracil: Arg-31, Ser-46, and Lys-65. The 5-(2-oxopropylideneamino)-6-(D-ribitylamino)uracil site is built by Arg-31, Ser-46, and Lys-65. 7-hydroxy-6-methyl-8-(1-D-ribityl)lumazine is bound by residues Arg-31, Ser-46, and Lys-65. 8-(9H-purin-6-yl)-2-oxa-8-azabicyclo[3.3.1]nona-3,6-diene-4,6-dicarbaldehyde is bound by residues Lys-65 and His-80. Lys-65 is a 2-amino-4-oxopteridine-6-carbaldehyde binding site. Pyridoxal is bound at residue Lys-65. An N-linked (GlcNAc...) asparagine glycan is attached at Asn-107. The alpha-2 stretch occupies residues Gly-110–Thr-201. Arg-116 is a binding site for 8-(9H-purin-6-yl)-2-oxa-8-azabicyclo[3.3.1]nona-3,6-diene-4,6-dicarbaldehyde. 3 residues coordinate 5-(2-oxoethylideneamino)-6-(D-ribitylamino)uracil: Arg-116, Tyr-174, and Gln-175. 5-(2-oxopropylideneamino)-6-(D-ribitylamino)uracil-binding residues include Arg-116, Tyr-174, and Gln-175. 7-hydroxy-6-methyl-8-(1-D-ribityl)lumazine contacts are provided by Arg-116, Tyr-174, and Gln-175. 2 disulfide bridges follow: Cys-120–Cys-183 and Cys-222–Cys-278. Positions Glu-202 to Gln-293 are alpha-3. Positions Pro-203–His-282 constitute an Ig-like C1-type domain. Positions Glu-294–Met-302 are connecting peptide. The chain crosses the membrane as a helical span at residues Lys-303–Trp-323. Over Arg-324–Asp-340 the chain is Cytoplasmic.

This sequence belongs to the MHC class I family. Heterotrimer that consists of MR1, B2M and metabolite antigen. Major classes of metabolite ligands presented by MR1 include riboflavin-related antigens, pyrimidines and ribityl lumazines, nucleobase adducts and folate derivatives. Forms reversible covalent Schiff base complexes with microbial pyrimidine-based metabolite, which serves as a molecular switch triggering complete folding, stable association with B2M and translocation of the ternary complex from endoplasmic reticulum to the plasma membrane. Alternatively, forms non-Schiff base complexes with ribityl lumazines. On antigen-presenting cells, the ternary complex interacts with TCR on MR1-restricted T cells. Interacts with TAPBP and TAPBPL chaperones in the endoplasmic reticulum. TAPBP associated or not with MHC class I peptide loading complex binds ligand-free MR1 or MR1-B2M complex, providing for stable MR1 pools ready for metabolite antigen processing. TAPBPL interacts with MR1 in a ligand-independent way; this interaction may stabilize MR1 pool and facilitate ligand loading and dissociation. Structurally, MR1-B2M heterodimer adopts a topology similar to classical MHC class I molecules, with alpha-1 and alpha-2 domains of MR1 forming the antigen-binding cleft composed of two alpha-helices resting on a floor of 7-stranded anti-parallel beta-pleated sheet. MR1-B2M heterodimer (via alpha-helices) interacts with TCR (via CDR domains). N-glycosylated.

Its subcellular location is the cell membrane. The protein localises to the endoplasmic reticulum membrane. It is found in the golgi apparatus membrane. The protein resides in the early endosome membrane. It localises to the late endosome membrane. In terms of biological role, antigen-presenting molecule specialized in displaying microbial pyrimidine-based metabolites to alpha-beta T cell receptors (TCR) on innate-type mucosal-associated invariant T (MAIT) cells. In complex with B2M preferentially presents riboflavin-derived metabolites to semi-invariant TCRs on MAIT cells, guiding immune surveillance of the microbial metabolome at mucosal epithelial barriers. Signature pyrimidine-based microbial antigens are generated via non-enzymatic condensation of metabolite intermediates of the riboflavin pathway with by-products arising from other metabolic pathways such as glycolysis. Typical potent antigenic metabolites are 5-(2-oxoethylideneamino)-6-D-ribitylaminouracil (5-OE-RU) and 5-(2-oxopropylideneamino)-6-D-ribitylaminouracil (5-OP-RU), products of condensation of 5-amino-6-D-ribityaminouracil (5-A-RU) with glyoxal or methylglyoxal by-products, respectively. May present microbial antigens to various MAIT cell subsets, providing for unique recognition of diverse microbes, including pathogens that do not synthesize riboflavin. Upon antigen recognition, elicits rapid innate-type MAIT cell activation to eliminate pathogenic microbes by directly killing infected cells. During T cell development, drives thymic selection and post-thymic terminal differentiation of MAIT cells in a process dependent on commensal microflora. Acts as an immune sensor of cancer cell metabolome. May present a tumor-specific or -associated metabolite essential for cancer cell survival to a pan-cancer TCR on a non-MAIT CD8-positive T cell clone, triggering T cell-mediated killing of a wide range of cancer cell types. May present tumor-enriched pyridoxal and pyridoxal 5'-phosphate antigens, enabling preferential recognition of cancer cells. Presents nucleobase carbonyl adducts generated during oxidative stress. Captures M3Ade, a nucleobase adduct composed of one adenine modified by a malondialdehyde trimer, for recognition by MR1-restricted T cell clones expressing a polyclonal TCR repertoire. This Pongo pygmaeus (Bornean orangutan) protein is Major histocompatibility complex class I-related gene protein.